The chain runs to 276 residues: Large ribosomal subunit protein uL2 (276 aa).

Positions G223–V276 are disordered. Composition is skewed to basic and acidic residues over residues D230–G240 and R263–V276.

This sequence belongs to the universal ribosomal protein uL2 family. Part of the 50S ribosomal subunit. Forms a bridge to the 30S subunit in the 70S ribosome.

In terms of biological role, one of the primary rRNA binding proteins. Required for association of the 30S and 50S subunits to form the 70S ribosome, for tRNA binding and peptide bond formation. It has been suggested to have peptidyltransferase activity; this is somewhat controversial. Makes several contacts with the 16S rRNA in the 70S ribosome. The sequence is that of Large ribosomal subunit protein uL2 from Thermotoga neapolitana (strain ATCC 49049 / DSM 4359 / NBRC 107923 / NS-E).